The following is a 235-amino-acid chain: Aspartate/glutamate leucyltransferase (235 aa).

The protein belongs to the R-transferase family. Bpt subfamily.

It is found in the cytoplasm. It carries out the reaction N-terminal L-glutamyl-[protein] + L-leucyl-tRNA(Leu) = N-terminal L-leucyl-L-glutamyl-[protein] + tRNA(Leu) + H(+). The catalysed reaction is N-terminal L-aspartyl-[protein] + L-leucyl-tRNA(Leu) = N-terminal L-leucyl-L-aspartyl-[protein] + tRNA(Leu) + H(+). Its function is as follows. Functions in the N-end rule pathway of protein degradation where it conjugates Leu from its aminoacyl-tRNA to the N-termini of proteins containing an N-terminal aspartate or glutamate. This chain is Aspartate/glutamate leucyltransferase, found in Pseudomonas syringae pv. syringae (strain B728a).